Here is a 164-residue protein sequence, read N- to C-terminus: Protein SprT (164 aa).

One can recognise a SprT-like domain in the interval 14-156 (QQAETFFKRP…LCKRCRETLV (143 aa)). His-69 contacts Zn(2+). Glu-70 is an active-site residue. His-73 is a binding site for Zn(2+).

This sequence belongs to the SprT family. The cofactor is Zn(2+).

It localises to the cytoplasm. The sequence is that of Protein SprT from Pseudomonas putida (strain W619).